The sequence spans 102 residues: MIRRFFHTMGRQDRIYKTLSEALKTDKITLYNDSYKHSHHIAMKGVPDTNETHFRLEIVSPEFSGMSRVARHRLVYGLLKDEFDGGLHALQITSSKTPDEVS.

It belongs to the BolA/IbaG family.

It localises to the mitochondrion matrix. Its subcellular location is the cytoplasm. It is found in the nucleus. In terms of biological role, acts as a mitochondrial iron-sulfur (Fe-S) cluster assembly factor that facilitates [4Fe-4S] cluster insertion into a subset of mitochondrial proteins such as lipoyl synthase (LS) and succinate dehydrogenase (SDH). Required during the last step of iron-sulfur protein assembly when the iron-sulfur cluster is inserted into the target protein. Probably acts together with the monothiol glutaredoxin grx5. Not required for [2Fe-2S] cluster insertion into mitochondrial proteins. May be involved in control of cell division, especially during the resumption from cell cycle arrest. This Schizosaccharomyces pombe (strain 972 / ATCC 24843) (Fission yeast) protein is UV-induced protein uvi31.